We begin with the raw amino-acid sequence, 662 residues long: UvrABC system protein B (662 aa).

One can recognise a Helicase ATP-binding domain in the interval 31–188; it reads DNIEGGEKAQ…NDLVDIQFER (158 aa). 44–51 lines the ATP pocket; it reads GATGTGKT. Residues 97–120 carry the Beta-hairpin motif; that stretch reads YYDYYQPEAYVPSSDTYIEKDSSV. The Helicase C-terminal domain occupies 435–601; sequence QIDDLLGEIN…TIKKEIRDLI (167 aa). Residues 626 to 661 enclose the UVR domain; that stretch reads KELVKKLEKQMQEAVEVLDFELAAQIRDMMLEVKAL.

It belongs to the UvrB family. As to quaternary structure, forms a heterotetramer with UvrA during the search for lesions. Interacts with UvrC in an incision complex.

The protein resides in the cytoplasm. Its function is as follows. The UvrABC repair system catalyzes the recognition and processing of DNA lesions. A damage recognition complex composed of 2 UvrA and 2 UvrB subunits scans DNA for abnormalities. Upon binding of the UvrA(2)B(2) complex to a putative damaged site, the DNA wraps around one UvrB monomer. DNA wrap is dependent on ATP binding by UvrB and probably causes local melting of the DNA helix, facilitating insertion of UvrB beta-hairpin between the DNA strands. Then UvrB probes one DNA strand for the presence of a lesion. If a lesion is found the UvrA subunits dissociate and the UvrB-DNA preincision complex is formed. This complex is subsequently bound by UvrC and the second UvrB is released. If no lesion is found, the DNA wraps around the other UvrB subunit that will check the other stand for damage. This is UvrABC system protein B from Streptococcus pneumoniae serotype 2 (strain D39 / NCTC 7466).